Consider the following 365-residue polypeptide: A-type ATP synthase subunit C (365 aa).

It belongs to the V-ATPase V0D/AC39 subunit family. In terms of assembly, has multiple subunits with at least A(3), B(3), C, D, E, F, H, I and proteolipid K(x).

It localises to the cell membrane. Functionally, component of the A-type ATP synthase that produces ATP from ADP in the presence of a proton gradient across the membrane. The chain is A-type ATP synthase subunit C from Thermococcus kodakarensis (strain ATCC BAA-918 / JCM 12380 / KOD1) (Pyrococcus kodakaraensis (strain KOD1)).